The chain runs to 327 residues: Urease accessory protein UreD (327 aa).

The protein belongs to the UreD family. In terms of assembly, ureD, UreF and UreG form a complex that acts as a GTP-hydrolysis-dependent molecular chaperone, activating the urease apoprotein by helping to assemble the nickel containing metallocenter of UreC. The UreE protein probably delivers the nickel.

It is found in the cytoplasm. Its function is as follows. Required for maturation of urease via the functional incorporation of the urease nickel metallocenter. The polypeptide is Urease accessory protein UreD (Yersinia enterocolitica serotype O:8 / biotype 1B (strain NCTC 13174 / 8081)).